A 349-amino-acid chain; its full sequence is Isopentenyl-diphosphate delta-isomerase (349 aa).

A substrate-binding site is contributed by 9-10 (RK). FMN-binding positions include 65-67 (AMT), serine 95, and asparagine 124. A substrate-binding site is contributed by 95–97 (STH). Glutamine 154 provides a ligand contact to substrate. Mg(2+) is bound at residue glutamate 155. FMN is bound by residues lysine 186, serine 211, threonine 216, 262–264 (GLR), and 283–284 (SR).

The protein belongs to the IPP isomerase type 2 family. In terms of assembly, homooctamer. Dimer of tetramers. The cofactor is FMN. Requires NADPH as cofactor. Mg(2+) serves as cofactor.

The protein localises to the cytoplasm. The enzyme catalyses isopentenyl diphosphate = dimethylallyl diphosphate. Involved in the biosynthesis of isoprenoids. Catalyzes the 1,3-allylic rearrangement of the homoallylic substrate isopentenyl (IPP) to its allylic isomer, dimethylallyl diphosphate (DMAPP). The sequence is that of Isopentenyl-diphosphate delta-isomerase from Staphylococcus epidermidis (strain ATCC 35984 / DSM 28319 / BCRC 17069 / CCUG 31568 / BM 3577 / RP62A).